A 431-amino-acid polypeptide reads, in one-letter code: BEL1-like homeodomain protein 5 (431 aa).

The SR/KY domain stretch occupies residues 80 to 96 (PIYLKAAQELLNEIVNV). Residues 128 to 199 (GVAALQMKKA…AVKDMISLQI (72 aa)) are BELL domain. The homeobox DNA-binding region spans 228-290 (AWRPQRGLPE…NARVRMWKPL (63 aa)). Basic and acidic residues predominate over residues 302-312 (EESRKGSDRYS). The disordered stretch occupies residues 302 to 333 (EESRKGSDRYSTKGSSSKQPYNNTTSNESSNT). The span at 313–322 (TKGSSSKQPY) shows a compositional bias: polar residues. A compositionally biased stretch (low complexity) spans 323–333 (NNTTSNESSNT).

Belongs to the TALE/BELL homeobox family. As to quaternary structure, may form heterodimeric complexes with TALE/KNOX proteins. Interacts with OFP1.

The protein resides in the nucleus. This is BEL1-like homeodomain protein 5 (BLH5) from Arabidopsis thaliana (Mouse-ear cress).